The primary structure comprises 31 residues: Photosystem II reaction center protein T (31 aa).

A helical membrane pass occupies residues 3–23; sequence SLVYIFVFVVALGVLFFAIAF.

This sequence belongs to the PsbT family. In terms of assembly, PSII is composed of 1 copy each of membrane proteins PsbA, PsbB, PsbC, PsbD, PsbE, PsbF, PsbH, PsbI, PsbJ, PsbK, PsbL, PsbM, PsbT, PsbX, PsbY, PsbZ, Psb30/Ycf12, peripheral proteins PsbO, CyanoQ (PsbQ), PsbU, PsbV and a large number of cofactors. It forms dimeric complexes.

It localises to the cellular thylakoid membrane. Its function is as follows. Found at the monomer-monomer interface of the photosystem II (PS II) dimer, plays a role in assembly and dimerization of PSII. PSII is a light-driven water plastoquinone oxidoreductase, using light energy to abstract electrons from H(2)O, generating a proton gradient subsequently used for ATP formation. The sequence is that of Photosystem II reaction center protein T from Synechococcus elongatus (strain ATCC 33912 / PCC 7942 / FACHB-805) (Anacystis nidulans R2).